Reading from the N-terminus, the 402-residue chain is 4-hydroxy-3-methylbut-2-enyl diphosphate reductase (402 aa).

C66 contributes to the [4Fe-4S] cluster binding site. (2E)-4-hydroxy-3-methylbut-2-enyl diphosphate is bound at residue H96. H96 is a dimethylallyl diphosphate binding site. Isopentenyl diphosphate is bound at residue H96. C157 is a [4Fe-4S] cluster binding site. H185 serves as a coordination point for (2E)-4-hydroxy-3-methylbut-2-enyl diphosphate. H185 is a dimethylallyl diphosphate binding site. H185 provides a ligand contact to isopentenyl diphosphate. Catalysis depends on E187, which acts as the Proton donor. T250 serves as a coordination point for (2E)-4-hydroxy-3-methylbut-2-enyl diphosphate. Position 288 (C288) interacts with [4Fe-4S] cluster. The (2E)-4-hydroxy-3-methylbut-2-enyl diphosphate site is built by S317, S318, N319, and S379. Residues S317, S318, N319, and S379 each coordinate dimethylallyl diphosphate. S317, S318, N319, and S379 together coordinate isopentenyl diphosphate.

It belongs to the IspH family. [4Fe-4S] cluster serves as cofactor.

It catalyses the reaction isopentenyl diphosphate + 2 oxidized [2Fe-2S]-[ferredoxin] + H2O = (2E)-4-hydroxy-3-methylbut-2-enyl diphosphate + 2 reduced [2Fe-2S]-[ferredoxin] + 2 H(+). The catalysed reaction is dimethylallyl diphosphate + 2 oxidized [2Fe-2S]-[ferredoxin] + H2O = (2E)-4-hydroxy-3-methylbut-2-enyl diphosphate + 2 reduced [2Fe-2S]-[ferredoxin] + 2 H(+). The protein operates within isoprenoid biosynthesis; dimethylallyl diphosphate biosynthesis; dimethylallyl diphosphate from (2E)-4-hydroxy-3-methylbutenyl diphosphate: step 1/1. Its pathway is isoprenoid biosynthesis; isopentenyl diphosphate biosynthesis via DXP pathway; isopentenyl diphosphate from 1-deoxy-D-xylulose 5-phosphate: step 6/6. In terms of biological role, catalyzes the conversion of 1-hydroxy-2-methyl-2-(E)-butenyl 4-diphosphate (HMBPP) into a mixture of isopentenyl diphosphate (IPP) and dimethylallyl diphosphate (DMAPP). Acts in the terminal step of the DOXP/MEP pathway for isoprenoid precursor biosynthesis. The protein is 4-hydroxy-3-methylbut-2-enyl diphosphate reductase of Nostoc sp. (strain PCC 7120 / SAG 25.82 / UTEX 2576).